A 189-amino-acid chain; its full sequence is Thymidine kinase (189 aa).

ATP contacts are provided by residues 9-16 and 85-88; these read GTMNSGKT and DESQ. Glu86 acts as the Proton acceptor in catalysis. 4 residues coordinate Zn(2+): Cys143, Cys146, Cys180, and His183.

The protein belongs to the thymidine kinase family. In terms of assembly, homotetramer.

It localises to the cytoplasm. The catalysed reaction is thymidine + ATP = dTMP + ADP + H(+). The protein is Thymidine kinase of Streptococcus pyogenes serotype M18 (strain MGAS8232).